Here is a 425-residue protein sequence, read N- to C-terminus: Serine--tRNA ligase (425 aa).

230 to 232 (TAE) provides a ligand contact to L-serine. 261 to 263 (RSE) is an ATP binding site. E284 provides a ligand contact to L-serine. 348–351 (EISS) serves as a coordination point for ATP. S384 is a binding site for L-serine.

Belongs to the class-II aminoacyl-tRNA synthetase family. Type-1 seryl-tRNA synthetase subfamily. In terms of assembly, homodimer. The tRNA molecule binds across the dimer.

It is found in the cytoplasm. The catalysed reaction is tRNA(Ser) + L-serine + ATP = L-seryl-tRNA(Ser) + AMP + diphosphate + H(+). It carries out the reaction tRNA(Sec) + L-serine + ATP = L-seryl-tRNA(Sec) + AMP + diphosphate + H(+). The protein operates within aminoacyl-tRNA biosynthesis; selenocysteinyl-tRNA(Sec) biosynthesis; L-seryl-tRNA(Sec) from L-serine and tRNA(Sec): step 1/1. Functionally, catalyzes the attachment of serine to tRNA(Ser). Is also able to aminoacylate tRNA(Sec) with serine, to form the misacylated tRNA L-seryl-tRNA(Sec), which will be further converted into selenocysteinyl-tRNA(Sec). The protein is Serine--tRNA ligase of Streptococcus pyogenes serotype M49 (strain NZ131).